Consider the following 142-residue polypeptide: 3-hydroxyacyl-[acyl-carrier-protein] dehydratase FabZ (142 aa).

His50 is a catalytic residue.

This sequence belongs to the thioester dehydratase family. FabZ subfamily.

The protein resides in the cytoplasm. The enzyme catalyses a (3R)-hydroxyacyl-[ACP] = a (2E)-enoyl-[ACP] + H2O. Its function is as follows. Involved in unsaturated fatty acids biosynthesis. Catalyzes the dehydration of short chain beta-hydroxyacyl-ACPs and long chain saturated and unsaturated beta-hydroxyacyl-ACPs. This chain is 3-hydroxyacyl-[acyl-carrier-protein] dehydratase FabZ, found in Clostridium botulinum (strain Alaska E43 / Type E3).